The sequence spans 614 residues: Acetylcholinesterase (614 aa).

Residues 1–31 (MRPPWYPLHTPSLASPLLFLLLSLLGGGARA) form the signal peptide. C100 and C127 are joined by a disulfide. S234 serves as the catalytic Acyl-ester intermediate. An intrachain disulfide couples C288 to C303. N296 carries N-linked (GlcNAc...) asparagine glycosylation. E365 serves as the catalytic Charge relay system. N381 is a glycosylation site (N-linked (GlcNAc...) asparagine). A disulfide bridge connects residues C440 and C560. The active-site Charge relay system is H478. An N-linked (GlcNAc...) asparagine glycan is attached at N495.

The protein belongs to the type-B carboxylesterase/lipase family. As to quaternary structure, homotetramer; composed of disulfide-linked homodimers. Catalytic forms H (GPI-anchor dimer) and T (asymmetric collagen-tailed), which differ in their C-terminus, account for all types of known ACHE forms. Interacts with PRIMA1. The interaction with PRIMA1 is required to anchor it to the basal lamina of cells and organize into tetramers. Has been found in central nervous system and muscle. Found in embryonic liver and spleen but not in adult liver.

It localises to the synapse. It is found in the secreted. The protein localises to the cell membrane. It carries out the reaction acetylcholine + H2O = choline + acetate + H(+). In terms of biological role, terminates signal transduction at the neuromuscular junction by rapid hydrolysis of the acetylcholine released into the synaptic cleft. This Rattus norvegicus (Rat) protein is Acetylcholinesterase (Ache).